The sequence spans 286 residues: ATP synthase gamma chain (286 aa).

The protein belongs to the ATPase gamma chain family. In terms of assembly, F-type ATPases have 2 components, CF(1) - the catalytic core - and CF(0) - the membrane proton channel. CF(1) has five subunits: alpha(3), beta(3), gamma(1), delta(1), epsilon(1). CF(0) has three main subunits: a, b and c.

Its subcellular location is the cell inner membrane. Functionally, produces ATP from ADP in the presence of a proton gradient across the membrane. The gamma chain is believed to be important in regulating ATPase activity and the flow of protons through the CF(0) complex. In Shewanella loihica (strain ATCC BAA-1088 / PV-4), this protein is ATP synthase gamma chain.